Consider the following 468-residue polypeptide: 6-phosphogluconate dehydrogenase, decarboxylating (468 aa).

NADP(+) is bound by residues 9–14, 32–34, 73–75, and Asn101; these read GLAVMG, NRS, and VKA. Substrate contacts are provided by residues Asn101 and 127–129; that span reads SGG. Lys182 serves as the catalytic Proton acceptor. Residue 185–186 participates in substrate binding; it reads HN. The active-site Proton donor is Glu189. Substrate is bound by residues Tyr190, Lys259, Arg286, Arg444, and His450.

This sequence belongs to the 6-phosphogluconate dehydrogenase family. In terms of assembly, homodimer.

It carries out the reaction 6-phospho-D-gluconate + NADP(+) = D-ribulose 5-phosphate + CO2 + NADPH. It participates in carbohydrate degradation; pentose phosphate pathway; D-ribulose 5-phosphate from D-glucose 6-phosphate (oxidative stage): step 3/3. Functionally, catalyzes the oxidative decarboxylation of 6-phosphogluconate to ribulose 5-phosphate and CO(2), with concomitant reduction of NADP to NADPH. This is 6-phosphogluconate dehydrogenase, decarboxylating (gnd) from Staphylococcus epidermidis (strain ATCC 35984 / DSM 28319 / BCRC 17069 / CCUG 31568 / BM 3577 / RP62A).